Consider the following 423-residue polypeptide: Putative competence-damage inducible protein (423 aa).

Belongs to the CinA family.

The protein is Putative competence-damage inducible protein of Streptococcus pyogenes serotype M2 (strain MGAS10270).